We begin with the raw amino-acid sequence, 110 residues long: Large ribosomal subunit protein uL22 (110 aa).

The protein belongs to the universal ribosomal protein uL22 family. As to quaternary structure, part of the 50S ribosomal subunit.

This protein binds specifically to 23S rRNA; its binding is stimulated by other ribosomal proteins, e.g. L4, L17, and L20. It is important during the early stages of 50S assembly. It makes multiple contacts with different domains of the 23S rRNA in the assembled 50S subunit and ribosome. Its function is as follows. The globular domain of the protein is located near the polypeptide exit tunnel on the outside of the subunit, while an extended beta-hairpin is found that lines the wall of the exit tunnel in the center of the 70S ribosome. This Alkaliphilus metalliredigens (strain QYMF) protein is Large ribosomal subunit protein uL22.